The primary structure comprises 352 residues: Farnesyl pyrophosphate synthase (352 aa).

Isopentenyl diphosphate contacts are provided by lysine 52, arginine 55, and glutamine 93. 2 residues coordinate Mg(2+): aspartate 100 and aspartate 104. Arginine 109 is a dimethylallyl diphosphate binding site. Residue arginine 110 participates in isopentenyl diphosphate binding. Lysine 197, threonine 198, glutamine 237, lysine 254, and lysine 263 together coordinate dimethylallyl diphosphate.

Belongs to the FPP/GGPP synthase family. Requires Mg(2+) as cofactor.

The catalysed reaction is isopentenyl diphosphate + dimethylallyl diphosphate = (2E)-geranyl diphosphate + diphosphate. It catalyses the reaction isopentenyl diphosphate + (2E)-geranyl diphosphate = (2E,6E)-farnesyl diphosphate + diphosphate. The protein operates within isoprenoid biosynthesis; farnesyl diphosphate biosynthesis; farnesyl diphosphate from geranyl diphosphate and isopentenyl diphosphate: step 1/1. Its pathway is isoprenoid biosynthesis; geranyl diphosphate biosynthesis; geranyl diphosphate from dimethylallyl diphosphate and isopentenyl diphosphate: step 1/1. Its function is as follows. Farnesyl pyrophosphate synthase; part of the second module of ergosterol biosynthesis pathway that includes the middle steps of the pathway. ERG20 catalyzes the sequential condensation of isopentenyl pyrophosphate with dimethylallyl pyrophosphate, and then with the resultant geranylpyrophosphate to the ultimate product farnesyl pyrophosphate. The second module is carried out in the vacuole and involves the formation of farnesyl diphosphate, which is also an important intermediate in the biosynthesis of ubiquinone, dolichol, heme and prenylated proteins. Activity by the mevalonate kinase ERG12 first converts mevalonate into 5-phosphomevalonate. 5-phosphomevalonate is then further converted to 5-diphosphomevalonate by the phosphomevalonate kinase ERG8. The diphosphomevalonate decarboxylase MVD1/ERG19 then produces isopentenyl diphosphate. The isopentenyl-diphosphate delta-isomerase IDI1 then catalyzes the 1,3-allylic rearrangement of the homoallylic substrate isopentenyl (IPP) to its highly electrophilic allylic isomer, dimethylallyl diphosphate (DMAPP). Finally the farnesyl diphosphate synthase ERG20 catalyzes the sequential condensation of isopentenyl pyrophosphate with dimethylallyl pyrophosphate, and then with the resultant geranylpyrophosphate to the ultimate product farnesyl pyrophosphate. The polypeptide is Farnesyl pyrophosphate synthase (ERG20) (Saccharomyces cerevisiae (strain ATCC 204508 / S288c) (Baker's yeast)).